The primary structure comprises 31 residues: Ranatuerin-2Ca (31 aa).

An intrachain disulfide couples Cys24 to Cys29.

As to expression, expressed by the skin glands.

The protein localises to the secreted. Antibacterial activity against Gram-positive bacterium S.aureus and Gram-negative bacterium E.coli. Has activity against C.albicans. This Lithobates clamitans (Green frog) protein is Ranatuerin-2Ca.